Consider the following 166-residue polypeptide: Crossover junction endodeoxyribonuclease RuvC (166 aa).

Catalysis depends on residues D9, E70, and D144. D9, E70, and D144 together coordinate Mg(2+).

This sequence belongs to the RuvC family. As to quaternary structure, homodimer which binds Holliday junction (HJ) DNA. The HJ becomes 2-fold symmetrical on binding to RuvC with unstacked arms; it has a different conformation from HJ DNA in complex with RuvA. In the full resolvosome a probable DNA-RuvA(4)-RuvB(12)-RuvC(2) complex forms which resolves the HJ. The cofactor is Mg(2+).

It is found in the cytoplasm. The enzyme catalyses Endonucleolytic cleavage at a junction such as a reciprocal single-stranded crossover between two homologous DNA duplexes (Holliday junction).. In terms of biological role, the RuvA-RuvB-RuvC complex processes Holliday junction (HJ) DNA during genetic recombination and DNA repair. Endonuclease that resolves HJ intermediates. Cleaves cruciform DNA by making single-stranded nicks across the HJ at symmetrical positions within the homologous arms, yielding a 5'-phosphate and a 3'-hydroxyl group; requires a central core of homology in the junction. The consensus cleavage sequence is 5'-(A/T)TT(C/G)-3'. Cleavage occurs on the 3'-side of the TT dinucleotide at the point of strand exchange. HJ branch migration catalyzed by RuvA-RuvB allows RuvC to scan DNA until it finds its consensus sequence, where it cleaves and resolves the cruciform DNA. In Neorickettsia sennetsu (strain ATCC VR-367 / Miyayama) (Ehrlichia sennetsu), this protein is Crossover junction endodeoxyribonuclease RuvC.